The sequence spans 1012 residues: F-box DNA helicase 1 (1012 aa).

A disordered region spans residues methionine 1–glutamine 54. The span at serine 12–glutamine 27 shows a compositional bias: polar residues. The 50-residue stretch at glutamine 185–leucine 234 folds into the F-box domain. The UvrD-like helicase ATP-binding domain occupies threonine 427 to glycine 692. An ATP-binding site is contributed by alanine 448–threonine 455.

The protein belongs to the helicase family. UvrD subfamily. As to quaternary structure, part of the SCF (SKP1-CUL1-F-box) E3 ubiquitin-protein ligase complex SCF(FBH1).

It is found in the nucleus. It localises to the chromosome. The enzyme catalyses Couples ATP hydrolysis with the unwinding of duplex DNA by translocating in the 3'-5' direction.. It carries out the reaction ATP + H2O = ADP + phosphate + H(+). It functions in the pathway protein modification; protein ubiquitination. Functionally, 3'-5' DNA helicase and substrate-recognition component of the SCF(FBH1) E3 ubiquitin ligase complex that plays a key role in response to stalled/damaged replication forks. Involved in genome maintenance by acting as an anti-recombinogenic helicase and preventing extensive strand exchange during homologous recombination: promotes RAD51 filament dissolution from stalled forks, thereby inhibiting homologous recombination and preventing excessive recombination. Also promotes cell death and DNA double-strand breakage in response to replication stress: promotes the endonucleolytic DNA cleavage following prolonged replication stress via its helicase activity, possibly to eliminate cells with excessive replication stress. This is F-box DNA helicase 1 from Gallus gallus (Chicken).